The sequence spans 200 residues: Bombinin-like peptides 3 (200 aa).

The segment at residues 1–16 (MNFKYIVAVSILIASA) is a signal peptide (or 18). Phenylalanine amide is present on residues phenylalanine 68 and phenylalanine 129.

This sequence belongs to the bombinin family. Expressed by the skin glands.

The protein resides in the secreted. Its function is as follows. Has antimicrobial activity, but no hemolytic activity. Preference on killing Gram-negative non-enteric bacteria. This chain is Bombinin-like peptides 3, found in Bombina orientalis (Oriental fire-bellied toad).